The chain runs to 335 residues: Glycerol-3-phosphate dehydrogenase [NAD(P)+] (335 aa).

Positions 15, 16, 36, and 110 each coordinate NADPH. The sn-glycerol 3-phosphate site is built by lysine 110, glycine 139, and threonine 141. Alanine 143 is a binding site for NADPH. Sn-glycerol 3-phosphate-binding residues include lysine 195, aspartate 248, serine 258, arginine 259, and asparagine 260. The active-site Proton acceptor is lysine 195. An NADPH-binding site is contributed by arginine 259. Valine 283 and glutamate 285 together coordinate NADPH.

It belongs to the NAD-dependent glycerol-3-phosphate dehydrogenase family.

It is found in the cytoplasm. It carries out the reaction sn-glycerol 3-phosphate + NAD(+) = dihydroxyacetone phosphate + NADH + H(+). The enzyme catalyses sn-glycerol 3-phosphate + NADP(+) = dihydroxyacetone phosphate + NADPH + H(+). It functions in the pathway membrane lipid metabolism; glycerophospholipid metabolism. Catalyzes the reduction of the glycolytic intermediate dihydroxyacetone phosphate (DHAP) to sn-glycerol 3-phosphate (G3P), the key precursor for phospholipid synthesis. This is Glycerol-3-phosphate dehydrogenase [NAD(P)+] from Pseudoalteromonas translucida (strain TAC 125).